The sequence spans 170 residues: Photosystem I assembly protein Ycf3 (170 aa).

TPR repeat units lie at residues 35–68 (AFTYYRDGMLAQSEGNYAEALQNYYEATRLEIDP), 72–105 (SYILYNIGLIHTSNGEHTKALEYYFRALERNPFL), and 120–153 (GEQAILQGDSEIAEAWFDQAAEYWKQAIALTPGN).

The protein belongs to the Ycf3 family.

It is found in the plastid. The protein localises to the chloroplast thylakoid membrane. Its function is as follows. Essential for the assembly of the photosystem I (PSI) complex. May act as a chaperone-like factor to guide the assembly of the PSI subunits. This Agrostis stolonifera (Creeping bentgrass) protein is Photosystem I assembly protein Ycf3.